The sequence spans 169 residues: Probable inosine/xanthosine triphosphatase (169 aa).

Aspartate 58 provides a ligand contact to Mg(2+).

Belongs to the YjjX NTPase family. In terms of assembly, homodimer. Requires Mg(2+) as cofactor. Mn(2+) serves as cofactor.

It carries out the reaction XTP + H2O = XDP + phosphate + H(+). The catalysed reaction is ITP + H2O = IDP + phosphate + H(+). Functionally, phosphatase that hydrolyzes non-canonical purine nucleotides such as XTP and ITP to their respective diphosphate derivatives. Probably excludes non-canonical purines from DNA/RNA precursor pool, thus preventing their incorporation into DNA/RNA and avoiding chromosomal lesions. This chain is Probable inosine/xanthosine triphosphatase, found in Archaeoglobus fulgidus (strain ATCC 49558 / DSM 4304 / JCM 9628 / NBRC 100126 / VC-16).